The following is a 305-amino-acid chain: GTPase Era (305 aa).

In terms of domain architecture, Era-type G spans 13–181 (RCGYVAIVGR…EKLVAERLPE (169 aa)). Residues 21-28 (GRPNVGKS) form a G1 region. 21 to 28 (GRPNVGKS) lines the GTP pocket. A G2 region spans residues 47–51 (QTTRH). Residues 68–71 (DTPG) are G3. Residues 68–72 (DTPGL) and 130–133 (NKTD) each bind GTP. A G4 region spans residues 130–133 (NKTD). Positions 160–162 (ISA) are G5. The 85-residue stretch at 204–288 (VREKIMRQLG…MLNLWVKVKG (85 aa)) folds into the KH type-2 domain.

It belongs to the TRAFAC class TrmE-Era-EngA-EngB-Septin-like GTPase superfamily. Era GTPase family. In terms of assembly, monomer.

It is found in the cytoplasm. It localises to the cell inner membrane. Its function is as follows. An essential GTPase that binds both GDP and GTP, with rapid nucleotide exchange. Plays a role in 16S rRNA processing and 30S ribosomal subunit biogenesis and possibly also in cell cycle regulation and energy metabolism. The chain is GTPase Era from Pseudomonas aeruginosa (strain LESB58).